A 383-amino-acid chain; its full sequence is Chromatin structure-remodeling complex subunit SFH1 (383 aa).

The disordered stretch occupies residues 61 to 80 (DDDEKVHSDNGKGEGEEVGH). Residues 64 to 80 (EKVHSDNGKGEGEEVGH) show a composition bias toward basic and acidic residues.

The protein belongs to the SNF5 family.

It localises to the nucleus. In terms of biological role, part of the chromatin structure-remodeling complex (RSC) which is involved in transcription regulation and nucleosome positioning. RSC is responsible for the transfer of a histone octamer from a nucleosome core particle to naked DNA. The reaction requires ATP and involves an activated RSC-nucleosome intermediate. Remodeling reaction also involves DNA translocation, DNA twist and conformational change. As a reconfigurer of centromeric and flanking nucleosomes, RSC complex is required both for proper kinetochore function in chromosome segregation and, via a PKC1-dependent signaling pathway, for organization of the cellular cytoskeleton. This subunit is essential for mitotic growth and required for cell cycle progression. In Eremothecium gossypii (strain ATCC 10895 / CBS 109.51 / FGSC 9923 / NRRL Y-1056) (Yeast), this protein is Chromatin structure-remodeling complex subunit SFH1 (SFH1).